The primary structure comprises 511 residues: 2,3-bisphosphoglycerate-independent phosphoglycerate mutase (511 aa).

Residue aspartate 12 participates in Mn(2+) binding. Tyrosine 36 carries the phosphotyrosine modification. A Mn(2+)-binding site is contributed by serine 62. Serine 62 functions as the Phosphoserine intermediate in the catalytic mechanism. Residues histidine 123, 153–154, arginine 185, arginine 191, 261–264, and lysine 336 contribute to the substrate site; these read RD and RPDR. Aspartate 403, histidine 407, aspartate 444, histidine 445, and histidine 462 together coordinate Mn(2+).

It belongs to the BPG-independent phosphoglycerate mutase family. Monomer. The cofactor is Mn(2+).

The enzyme catalyses (2R)-2-phosphoglycerate = (2R)-3-phosphoglycerate. The protein operates within carbohydrate degradation; glycolysis; pyruvate from D-glyceraldehyde 3-phosphate: step 3/5. Catalyzes the interconversion of 2-phosphoglycerate and 3-phosphoglycerate. The sequence is that of 2,3-bisphosphoglycerate-independent phosphoglycerate mutase from Geobacillus kaustophilus (strain HTA426).